Here is a 335-residue protein sequence, read N- to C-terminus: MSWFTPEVIDVILTVVKAIVILLAVVIAGALLSFVERRLLGWWQDRYGPNRVGPFGMFQIAADMLKMFFKEDWTPPFADKVIFTLAPVVAMSALLIAFAIIPITPTWGVADLNIGLLFFFAMAGLSVYAVLFAGWSSNNKFALLGSLRASAQTVSYEVFMGLALMGIVVQVGSFNMRDIVEYQAQNLWFIIPQFFGFCTFFIAGVAVTHRHPFDQPEAEQELADGYHIEYAGMKWGMFFVGEYIGIILISALLVTLFFGGWHGPFGILPQLSFVWFALKTAFFIMLFILLRASIPRPRYDQVMDFSWKFCLPLTLINLLITAAVVLWNTPAVAVQ.

The next 8 helical transmembrane spans lie at 11–31, 81–101, 114–134, 154–174, 187–207, 238–258, 270–290, and 307–327; these read VILT…AGAL, VIFT…FAII, IGLL…LFAG, VSYE…VGSF, LWFI…GVAV, FFVG…TLFF, QLSF…FILL, and WKFC…VVLW.

This sequence belongs to the complex I subunit 1 family. As to quaternary structure, NDH-1 is composed of 13 different subunits. Subunits NuoA, H, J, K, L, M, N constitute the membrane sector of the complex.

Its subcellular location is the cell inner membrane. The enzyme catalyses a quinone + NADH + 5 H(+)(in) = a quinol + NAD(+) + 4 H(+)(out). Its function is as follows. NDH-1 shuttles electrons from NADH, via FMN and iron-sulfur (Fe-S) centers, to quinones in the respiratory chain. The immediate electron acceptor for the enzyme in this species is believed to be ubiquinone. Couples the redox reaction to proton translocation (for every two electrons transferred, four hydrogen ions are translocated across the cytoplasmic membrane), and thus conserves the redox energy in a proton gradient. This subunit may bind ubiquinone. The chain is NADH-quinone oxidoreductase subunit H from Pseudomonas fluorescens (strain ATCC BAA-477 / NRRL B-23932 / Pf-5).